The following is a 267-amino-acid chain: Phosphate import ATP-binding protein PstB 1 (267 aa).

The ABC transporter domain occupies 21–262; it reads LETKDLHVYY…AALQSTSDYV (242 aa). 53–60 contributes to the ATP binding site; the sequence is GPSGCGKS.

Belongs to the ABC transporter superfamily. Phosphate importer (TC 3.A.1.7) family. The complex is composed of two ATP-binding proteins (PstB), two transmembrane proteins (PstC and PstA) and a solute-binding protein (PstS).

The protein localises to the cell membrane. The enzyme catalyses phosphate(out) + ATP + H2O = ADP + 2 phosphate(in) + H(+). Its function is as follows. Part of the ABC transporter complex PstSACB involved in phosphate import. Responsible for energy coupling to the transport system. This Streptococcus thermophilus (strain CNRZ 1066) protein is Phosphate import ATP-binding protein PstB 1.